We begin with the raw amino-acid sequence, 471 residues long: MEQQSLKVVIVGGSIAGLTLAHCLHRANIDHVVLEKRAEIAPQEGASIGIWPNGARMLEQLGLYGELEKLTEPLNLMHIAFPDGFSFEDLLPTTINQRFGYPIIFLDRQKFLETLYRKYPDKSKIVTNTRVAEVQSSEKCARVITEDGTMYEGDIVVGADGVHSLVRREMWKLGDSKQPGSVPSREKTGMTVEYSCVYGISSPIVGLRAGESVNSYMDGMTVLTFHGKGGRVYWFLIQKLHQKYTYPNTPRYTVEDAERLCTDHRDTTIWKDIRIGHLWDNREVVSMTALEENLFAKWHFHRIGLMGDSIHKMTPNIGQGANSAIEDAAVFSSLLVHMMTSEGPGRPSSARIQRLLHDYQACRYERAEMIYHRSRFGARFQSRDDAVKLIVGRYVVPRIRNRLANISSMLIANGEIIQYLPFPKRSGPGWEKFRNKGEWMPYTPFALFSAILLVQHVVPLLGLTSPLLLAS.

Residues Glu35, Gly49, and Arg108 each contribute to the FAD site. The active site involves Tyr216. FAD is bound by residues Asp308 and Ala321. The next 2 membrane-spanning stretches (helical) occupy residues 403 to 423 (LANI…LPFP) and 443 to 463 (TPFA…LLGL).

The protein belongs to the paxM FAD-dependent monooxygenase family. FAD is required as a cofactor.

It localises to the membrane. The protein operates within secondary metabolite biosynthesis; terpenoid biosynthesis. Its function is as follows. FAD-dependent monooxygenase; part of the gene cluster that mediates the biosynthesis of anditomin, a fungal meroterpenoid. The first step of the pathway is the synthesis of 3,5-dimethylorsellinic acid (DMOA) by the polyketide synthase andM. DMOA is then converted to the phthalide compound 5,7-dihydroxy-4,6-dimethylphthalide (DHDMP) by the cytochrome P450 monooxygenase andK, which is further prenylated by the prenyltransferase andD to yield farnesyl-DHDMP. Further epoxidation by the FAD-dependent monooxygenase andE leads to epoxyfarnesyl-DHDMP. The next step involves the terpene cyclase andB that converts epoxyfarnesyl-DHDMP into preandiloid A through opening of the epoxide ring followed by the cyclization of the farnesyl moiety. Preandiloid A is in turn oxidized at the C-3 hydroxyl group to yield preandiloid B by the dehydrogenase andC. The dioxygenase andA is solely responsible for the dehydrogenation of preandiloid B leading to the enone preandiloid C, as well as for the intriguing structural rearrangement to generate the bicyclo[2.2.2]octane core, transforming preandiloid C into andiconin. FAD-binding monooxygenase andJ then produces andilesin D which is reduced by dehydrogenase andI to yield andilesin A. Action of acetyltransferase andG followed by a spontaneous acetate elimination leads then to andilesin B, which is in turn substrate of the short chain dehydrogenase andH to yield andilesin C. Finally, the dioxygenase andF catalyzes the transformation of andilesin C to anditomin. The chain is FAD-dependent monooxygenase andE from Emericella variicolor (Aspergillus stellatus).